Reading from the N-terminus, the 417-residue chain is Putative UDP-arabinose 4-epimerase 2 (417 aa).

Residues 1-31 (MLNLGRARTGRQNRSMSFEGLDFADPKKNNN) are Cytoplasmic-facing. The helical; Signal-anchor for type II membrane protein transmembrane segment at 32 to 54 (YMGKIVLVMTLTAMCILLLNQSP) threads the bilayer. Over 55 to 417 (TFNTPSVFSR…YGSSSLVSAY (363 aa)) the chain is Lumenal. 71–102 (HVLVTGGAGYIGSHAALRLLKDSYRVTIVDNL) contacts NAD(+). Residue Tyr-219 is the Proton acceptor of the active site.

It belongs to the NAD(P)-dependent epimerase/dehydratase family. Requires NAD(+) as cofactor.

It localises to the golgi apparatus. Its subcellular location is the golgi stack membrane. It catalyses the reaction UDP-beta-L-arabinopyranose = UDP-alpha-D-xylose. It functions in the pathway nucleotide-sugar biosynthesis; UDP-L-arabinose biosynthesis; UDP-L-arabinose from UDP-alpha-D-xylose: step 1/1. The protein operates within cell wall biogenesis; cell wall polysaccharide biosynthesis. This chain is Putative UDP-arabinose 4-epimerase 2, found in Arabidopsis thaliana (Mouse-ear cress).